A 391-amino-acid chain; its full sequence is Phosphoglycerate kinase (391 aa).

Substrate contacts are provided by residues 21 to 23, Arg36, 59 to 62, Arg113, and Arg146; these read DLN and HLGR. ATP-binding positions include Lys197, Glu319, and 345–348; that span reads GGDT.

The protein belongs to the phosphoglycerate kinase family. As to quaternary structure, monomer.

Its subcellular location is the cytoplasm. It carries out the reaction (2R)-3-phosphoglycerate + ATP = (2R)-3-phospho-glyceroyl phosphate + ADP. Its pathway is carbohydrate degradation; glycolysis; pyruvate from D-glyceraldehyde 3-phosphate: step 2/5. This chain is Phosphoglycerate kinase, found in Shewanella sp. (strain MR-4).